Reading from the N-terminus, the 348-residue chain is Major outer membrane protein P.IB (348 aa).

The signal sequence occupies residues 1-19 (MKKSLIALTLAALPVAATA).

It belongs to the Gram-negative porin family. Homotrimer.

It localises to the cell outer membrane. Its function is as follows. Serves as a slightly cation selective porin. Major antigen on the gonococcal cell surface and it may have pathogenic properties in addition to its porin activity. This Neisseria gonorrhoeae protein is Major outer membrane protein P.IB (porB).